We begin with the raw amino-acid sequence, 122 residues long: Basic phospholipase A2 PLA-B (122 aa).

7 cysteine pairs are disulfide-bonded: C26–C115, C28–C44, C43–C95, C49–C122, C50–C88, C57–C81, and C75–C86. Positions 27, 29, and 31 each coordinate Ca(2+). H47 is a catalytic residue. Ca(2+) is bound at residue D48. Residue D89 is part of the active site.

The protein belongs to the phospholipase A2 family. Group II subfamily. D49 sub-subfamily. Requires Ca(2+) as cofactor. In terms of tissue distribution, expressed by the venom gland.

It localises to the secreted. The enzyme catalyses a 1,2-diacyl-sn-glycero-3-phosphocholine + H2O = a 1-acyl-sn-glycero-3-phosphocholine + a fatty acid + H(+). Functionally, snake venom phospholipase A2 (PLA2) that displays edema-inducing activities. PLA-B is three times more active than PLA-A in edema-inducing activities. PLA2 catalyzes the calcium-dependent hydrolysis of the 2-acyl groups in 3-sn-phosphoglycerides. In Protobothrops flavoviridis (Habu), this protein is Basic phospholipase A2 PLA-B.